We begin with the raw amino-acid sequence, 314 residues long: PDZ domain-containing protein GIPC2 (314 aa).

Over residues 1–12 (MPLGLRGKKKAA) the composition is skewed to basic residues. The interval 1–36 (MPLGLRGKKKAAKSKEAARLVEGERSSGSQGVPGPP) is disordered. Residues 13–25 (KSKEAARLVEGER) are compositionally biased toward basic and acidic residues. One can recognise a PDZ domain in the interval 117–197 (EVNVYKSEDS…EELFTLQLIE (81 aa)).

The protein belongs to the GIPC family. In terms of assembly, probably interacts with SEMA5A. Expressed in kidney and lung (at protein level).

The protein localises to the cytoplasm. The polypeptide is PDZ domain-containing protein GIPC2 (Gipc2) (Mus musculus (Mouse)).